A 219-amino-acid polypeptide reads, in one-letter code: Large ribosomal subunit protein uL3 (219 aa).

This sequence belongs to the universal ribosomal protein uL3 family. In terms of assembly, part of the 50S ribosomal subunit. Forms a cluster with proteins L14 and L19.

Its function is as follows. One of the primary rRNA binding proteins, it binds directly near the 3'-end of the 23S rRNA, where it nucleates assembly of the 50S subunit. The chain is Large ribosomal subunit protein uL3 from Salinispora tropica (strain ATCC BAA-916 / DSM 44818 / JCM 13857 / NBRC 105044 / CNB-440).